Here is an 872-residue protein sequence, read N- to C-terminus: Alanine--tRNA ligase (872 aa).

Zn(2+) contacts are provided by histidine 567, histidine 571, cysteine 669, and histidine 673.

It belongs to the class-II aminoacyl-tRNA synthetase family. Zn(2+) serves as cofactor.

It localises to the cytoplasm. The enzyme catalyses tRNA(Ala) + L-alanine + ATP = L-alanyl-tRNA(Ala) + AMP + diphosphate. Its function is as follows. Catalyzes the attachment of alanine to tRNA(Ala) in a two-step reaction: alanine is first activated by ATP to form Ala-AMP and then transferred to the acceptor end of tRNA(Ala). Also edits incorrectly charged Ser-tRNA(Ala) and Gly-tRNA(Ala) via its editing domain. This Streptococcus agalactiae serotype V (strain ATCC BAA-611 / 2603 V/R) protein is Alanine--tRNA ligase.